A 194-amino-acid chain; its full sequence is Molybdenum cofactor guanylyltransferase (194 aa).

Residues 12–14 (LAG), Lys25, Asn53, Asp71, and Asp101 contribute to the GTP site. Asp101 is a Mg(2+) binding site.

Belongs to the MobA family. Monomer. Mg(2+) is required as a cofactor.

It localises to the cytoplasm. The catalysed reaction is Mo-molybdopterin + GTP + H(+) = Mo-molybdopterin guanine dinucleotide + diphosphate. In terms of biological role, transfers a GMP moiety from GTP to Mo-molybdopterin (Mo-MPT) cofactor (Moco or molybdenum cofactor) to form Mo-molybdopterin guanine dinucleotide (Mo-MGD) cofactor. The sequence is that of Molybdenum cofactor guanylyltransferase from Escherichia coli O6:H1 (strain CFT073 / ATCC 700928 / UPEC).